A 356-amino-acid chain; its full sequence is Vanillin synthase, chloroplastic (356 aa).

An N-linked (GlcNAc...) asparagine glycan is attached at asparagine 122. Intrachain disulfides connect cysteine 159–cysteine 202 and cysteine 193–cysteine 235. Cysteine 162 is an active-site residue. Asparagine 251 is a glycosylation site (N-linked (GlcNAc...) asparagine). Cysteines 293 and 343 form a disulfide. Catalysis depends on residues histidine 302 and asparagine 322.

This sequence belongs to the peptidase C1 family. Forms homodimers, homotrimers and homotetramers. As to expression, accumulates in the inner part of vanilla pods (at protein level). Expressed in single cells located a few cell layers from the inner epidermis.

It is found in the plastid. It localises to the chloroplast. It catalyses the reaction (E)-ferulate + H2O = vanillin + acetate. The catalysed reaction is 4-O-beta-D-glucosyl-trans-ferulate + H2O = 4-O-beta-D-glucosyl-vanillin + acetate. It participates in aromatic compound metabolism; phenylpropanoid biosynthesis. In terms of biological role, involved in the biosynthesis of vanillin (4-hydroxy-3-methoxy-benzaldehyde) and derivative natural products, key components of vanilla pods flavor. Catalyzes the double carbon bond cleavage of ferulic acid to vanillin and of their respective glucosides via a coupled non-oxidative hydratase/lyase reaction. Inactive toward p-coumaric acid, caffeic acid and their glucosides derivatives. This chain is Vanillin synthase, chloroplastic, found in Vanilla planifolia (Vanilla).